The following is a 294-amino-acid chain: ATP phosphoribosyltransferase (294 aa).

This sequence belongs to the ATP phosphoribosyltransferase family. Long subfamily. It depends on Mg(2+) as a cofactor.

It is found in the cytoplasm. The enzyme catalyses 1-(5-phospho-beta-D-ribosyl)-ATP + diphosphate = 5-phospho-alpha-D-ribose 1-diphosphate + ATP. Its pathway is amino-acid biosynthesis; L-histidine biosynthesis; L-histidine from 5-phospho-alpha-D-ribose 1-diphosphate: step 1/9. Feedback inhibited by histidine. Catalyzes the condensation of ATP and 5-phosphoribose 1-diphosphate to form N'-(5'-phosphoribosyl)-ATP (PR-ATP). Has a crucial role in the pathway because the rate of histidine biosynthesis seems to be controlled primarily by regulation of HisG enzymatic activity. The chain is ATP phosphoribosyltransferase from Chlorobium chlorochromatii (strain CaD3).